A 282-amino-acid polypeptide reads, in one-letter code: Acetylglutamate kinase (282 aa).

Residues 62 to 63 (GG), Arg84, and Asn178 each bind substrate.

It belongs to the acetylglutamate kinase family. ArgB subfamily.

Its subcellular location is the cytoplasm. The enzyme catalyses N-acetyl-L-glutamate + ATP = N-acetyl-L-glutamyl 5-phosphate + ADP. The protein operates within amino-acid biosynthesis; L-arginine biosynthesis; N(2)-acetyl-L-ornithine from L-glutamate: step 2/4. In terms of biological role, catalyzes the ATP-dependent phosphorylation of N-acetyl-L-glutamate. The chain is Acetylglutamate kinase from Thermotoga sp. (strain RQ2).